Reading from the N-terminus, the 326-residue chain is MRLPVCLILLGPLIAQGTEEDCPHKKAVTLLPSFTMTPTATESTASPTTSHRPTTTSHGNVTVHTSSGPTTVTHNPATTTSHGNATISHATVSPTTNGTATSPRSSTVGPHPGPPPPSPSPRSKGALGNYTWANGSQPCVQLQAQIQIRILYPIQGGRKAWGISVLNPNKTKVQGGCDGTHPHLSLSFPYGQLTFGFKQDLHQSPSTVYLDYMAVEYNVSFPQAAQWTFMAQNSSLRELQAPLGQSFCCGNASIVLSPAVHLDLLSLRLQAAQLPDKGHFGPCFSCNRDQSLLLPLIIGLVLLGLLTLVLIAFCITRRRQSTYQPL.

Positions 1-20 (MRLPVCLILLGPLIAQGTEE) are cleaved as a signal peptide. The mucin-like stretch occupies residues 21–109 (DCPHKKAVTL…ATSPRSSTVG (89 aa)). Topologically, residues 21-291 (DCPHKKAVTL…PCFSCNRDQS (271 aa)) are extracellular. Over residues 38–58 (PTATESTASPTTSHRPTTTSH) the composition is skewed to low complexity. Residues 38–129 (PTATESTASP…SPRSKGALGN (92 aa)) are disordered. Tandem repeats lie at residues 44-49 (TASPTT), 50-64 (SHRPTTTSHGNVTVH), 65-72 (TSSGPTTV), and 73-88 (THNPATTTSHGNATIS). Positions 59 to 69 (GNVTVHTSSGP) are enriched in polar residues. Asn60 carries an N-linked (GlcNAc...) asparagine glycan. The segment covering 70–80 (TTVTHNPATTT) has biased composition (low complexity). Residues 81–108 (SHGNATISHATVSPTTNGTATSPRSSTV) show a composition bias toward polar residues. N-linked (GlcNAc...) asparagine glycosylation is found at Asn84 and Asn97. Pro residues predominate over residues 111–120 (HPGPPPPSPS). 6 N-linked (GlcNAc...) asparagine glycosylation sites follow: Asn129, Asn134, Asn169, Asn218, Asn233, and Asn251. Cys139 and Cys177 are oxidised to a cystine. A disulfide bond links Cys249 and Cys286. Residues 292-316 (LLLPLIIGLVLLGLLTLVLIAFCIT) traverse the membrane as a helical segment. The Cytoplasmic portion of the chain corresponds to 317-326 (RRRQSTYQPL).

Belongs to the LAMP family. Post-translationally, N- and O-glycosylated. Expressed in tissue macrophages and to a lesser extent in dendritic cells.

The protein localises to the endosome membrane. Its subcellular location is the lysosome membrane. It localises to the cell membrane. Functionally, could play a role in phagocytic activities of tissue macrophages, both in intracellular lysosomal metabolism and extracellular cell-cell and cell-pathogen interactions. Binds to tissue- and organ-specific lectins or selectins, allowing homing of macrophage subsets to particular sites. Rapid recirculation of CD68 from endosomes and lysosomes to the plasma membrane may allow macrophages to crawl over selectin-bearing substrates or other cells. The chain is Macrosialin (Cd68) from Mus musculus (Mouse).